Here is a 560-residue protein sequence, read N- to C-terminus: N-acetylglucosamine-6-sulfatase (560 aa).

Residues 1-25 (MRLLSLAPDRPRRGGPRHLTSGSPA) are disordered. The signal sequence occupies residues 1-48 (MRLLSLAPDRPRRGGPRHLTSGSPALPPPPPLLLLLLLLGGCLGVSGA). Positions 63, 64, and 99 each coordinate Ca(2+). C99 functions as the Nucleophile in the catalytic mechanism. Position 99 is a 3-oxoalanine (Cys) (C99). Residues N119, N125, N191, N206, N218, N287, and N325 are each glycosylated (N-linked (GlcNAc...) asparagine). Residues D334 and N335 each coordinate Ca(2+). N-linked (GlcNAc...) asparagine glycans are attached at residues N370, N395, N413, N430, N457, and N488. S549 is modified (phosphoserine).

It belongs to the sulfatase family. Ca(2+) serves as cofactor. Post-translationally, the conversion to 3-oxoalanine (also known as C-formylglycine, FGly), of a serine or cysteine residue in prokaryotes and of a cysteine residue in eukaryotes, is critical for catalytic activity.

The protein resides in the lysosome. The catalysed reaction is Hydrolysis of the 6-sulfate groups of the N-acetyl-D-glucosamine 6-sulfate units of heparan sulfate and keratan sulfate.. Hydrolyzes 6-sulfate groups in N-acetyl-d-glucosaminide units of heparin sulfate and keratan sulfate. The polypeptide is N-acetylglucosamine-6-sulfatase (GNS) (Bos taurus (Bovine)).